The primary structure comprises 344 residues: Dihydroorotase (344 aa).

Zn(2+) contacts are provided by H13 and H15. Substrate-binding positions include 15–17 (HLR) and N41. 3 residues coordinate Zn(2+): K98, H135, and H173. Position 98 is an N6-carboxylysine (K98). H135 is a substrate binding site. Substrate is bound at residue L218. D247 provides a ligand contact to Zn(2+). Residue D247 is part of the active site. 2 residues coordinate substrate: H251 and A263.

The protein belongs to the metallo-dependent hydrolases superfamily. DHOase family. Class II DHOase subfamily. In terms of assembly, homodimer. Zn(2+) serves as cofactor.

The enzyme catalyses (S)-dihydroorotate + H2O = N-carbamoyl-L-aspartate + H(+). Its pathway is pyrimidine metabolism; UMP biosynthesis via de novo pathway; (S)-dihydroorotate from bicarbonate: step 3/3. In terms of biological role, catalyzes the reversible cyclization of carbamoyl aspartate to dihydroorotate. This Neisseria meningitidis serogroup B (strain ATCC BAA-335 / MC58) protein is Dihydroorotase.